The sequence spans 498 residues: Putative ABC transporter ATP-binding protein MM_2387 (498 aa).

ABC transporter domains are found at residues 2 to 242 and 258 to 490; these read IELR…TSKS and ISIK…VEEK. ATP contacts are provided by residues 36–43 and 290–297; these read GHSAAGKT and GENGSGKT.

The protein belongs to the ABC transporter superfamily.

It is found in the cell membrane. In terms of biological role, probably part of an ABC transporter complex. Responsible for energy coupling to the transport system. The polypeptide is Putative ABC transporter ATP-binding protein MM_2387 (Methanosarcina mazei (strain ATCC BAA-159 / DSM 3647 / Goe1 / Go1 / JCM 11833 / OCM 88) (Methanosarcina frisia)).